Consider the following 56-residue polypeptide: Large ribosomal subunit protein bL33 (56 aa).

This sequence belongs to the bacterial ribosomal protein bL33 family.

This Halorhodospira halophila (strain DSM 244 / SL1) (Ectothiorhodospira halophila (strain DSM 244 / SL1)) protein is Large ribosomal subunit protein bL33.